Consider the following 95-residue polypeptide: Large ribosomal subunit protein bL25 (95 aa).

The protein belongs to the bacterial ribosomal protein bL25 family. As to quaternary structure, part of the 50S ribosomal subunit; part of the 5S rRNA/L5/L18/L25 subcomplex. Contacts the 5S rRNA. Binds to the 5S rRNA independently of L5 and L18.

In terms of biological role, this is one of the proteins that binds to the 5S RNA in the ribosome where it forms part of the central protuberance. The polypeptide is Large ribosomal subunit protein bL25 (Actinobacillus pleuropneumoniae serotype 5b (strain L20)).